The sequence spans 490 residues: MRINPPTYGSEISSIEKKNRGHIVQIIGPVLDVAFPPGKMPNIYNALIVKGRDTEQMNVTCEVQQLLGNNRVRAVAMNDTDGLMRGMEVIDTGTPITVPVGGSTLGRIFNVLGEPVDNLGPVDTNTTFTIHRSAPAFIQLDTKLSIFETGIKVVDLLAPYRRGGKIGLFGGAGVGKTVLIMELINNIAKAHGGVSVFGGVGERTREGNDLYMEMKESGVINEKNITESKVALVYGQMNEPPGARMRVGLTALTMAEYFRDVNEQDVLLFIDNIFRFVQAGSEVSALLGRMPSAVGYQPTLSTEMGSLQERITSTKEGSITSIQAVYVPADDLTDPAPATTFAHLDATTVLSRGLAAKGIYPAVDPLDSTSMMLQPRLVGEEHYETAQKVKQTLQRYKELQDIIAILGLDELSEEDRLTVARARKIERFLSQPFFVAEVFTGSPGKYVGLAETIIGFTLILSGELDSLPEQAFYLVGNINEATEKAMNLKT.

170–177 (GGAGVGKT) lines the ATP pocket.

The protein belongs to the ATPase alpha/beta chains family. F-type ATPases have 2 components, CF(1) - the catalytic core - and CF(0) - the membrane proton channel. CF(1) has five subunits: alpha(3), beta(3), gamma(1), delta(1), epsilon(1). CF(0) has four main subunits: a(1), b(1), b'(1) and c(9-12).

It localises to the plastid thylakoid membrane. It catalyses the reaction ATP + H2O + 4 H(+)(in) = ADP + phosphate + 5 H(+)(out). In terms of biological role, produces ATP from ADP in the presence of a proton gradient across the membrane. The catalytic sites are hosted primarily by the beta subunits. In Cuscuta reflexa (Southern Asian dodder), this protein is ATP synthase subunit beta, plastid.